The chain runs to 334 residues: Cytosolic Fe-S cluster assembly factor NBP35 (334 aa).

4 residues coordinate [4Fe-4S] cluster: cysteine 33, cysteine 47, cysteine 50, and cysteine 56. Glycine 86 to serine 93 lines the ATP pocket. Positions 259 and 262 each coordinate [4Fe-4S] cluster.

It belongs to the Mrp/NBP35 ATP-binding proteins family. NUBP1/NBP35 subfamily. In terms of assembly, heterotetramer of 2 NBP35 and 2 CFD1 chains. The cofactor is [4Fe-4S] cluster.

It is found in the cytoplasm. The protein resides in the nucleus. In terms of biological role, component of the cytosolic iron-sulfur (Fe/S) protein assembly (CIA) machinery. Required for maturation of extramitochondrial Fe-S proteins. The NBP35-CFD1 heterotetramer forms a Fe-S scaffold complex, mediating the de novo assembly of an Fe-S cluster and its transfer to target apoproteins. Required for biogenesis and export of both ribosomal subunits, which may reflect a role in assembly of the Fe/S clusters in RLI1, a protein which performs rRNA processing and ribosome export. This is Cytosolic Fe-S cluster assembly factor NBP35 from Candida glabrata (strain ATCC 2001 / BCRC 20586 / JCM 3761 / NBRC 0622 / NRRL Y-65 / CBS 138) (Yeast).